The sequence spans 534 residues: CTP synthase (534 aa).

The interval 1 to 267 is amidoligase domain; the sequence is MTKYIFVTGG…DQIVCDHLKL (267 aa). Ser-13 serves as a coordination point for CTP. Ser-13 is a binding site for UTP. ATP is bound at residue 14–19; that stretch reads SIGKGI. Tyr-54 serves as a coordination point for L-glutamine. ATP is bound at residue Asp-71. Mg(2+)-binding residues include Asp-71 and Glu-141. Residues 148–150, 188–193, and Lys-224 contribute to the CTP site; these read DIE and KTKPTQ. Residues 188–193 and Lys-224 each bind UTP; that span reads KTKPTQ. 240–242 lines the ATP pocket; sequence RDV. Residues 292–534 form the Glutamine amidotransferase type-1 domain; it reads KIALVGKYVE…FVTAAIKNSN (243 aa). Gly-354 provides a ligand contact to L-glutamine. The active-site Nucleophile; for glutamine hydrolysis is Cys-381. L-glutamine-binding positions include 382–385, Glu-405, and Arg-463; that span reads LGMQ. Residues His-508 and Glu-510 contribute to the active site.

Belongs to the CTP synthase family. Homotetramer.

The catalysed reaction is UTP + L-glutamine + ATP + H2O = CTP + L-glutamate + ADP + phosphate + 2 H(+). It carries out the reaction L-glutamine + H2O = L-glutamate + NH4(+). The enzyme catalyses UTP + NH4(+) + ATP = CTP + ADP + phosphate + 2 H(+). Its pathway is pyrimidine metabolism; CTP biosynthesis via de novo pathway; CTP from UDP: step 2/2. With respect to regulation, allosterically activated by GTP, when glutamine is the substrate; GTP has no effect on the reaction when ammonia is the substrate. The allosteric effector GTP functions by stabilizing the protein conformation that binds the tetrahedral intermediate(s) formed during glutamine hydrolysis. Inhibited by the product CTP, via allosteric rather than competitive inhibition. In terms of biological role, catalyzes the ATP-dependent amination of UTP to CTP with either L-glutamine or ammonia as the source of nitrogen. Regulates intracellular CTP levels through interactions with the four ribonucleotide triphosphates. The protein is CTP synthase of Streptococcus pyogenes serotype M4 (strain MGAS10750).